The sequence spans 382 residues: Quinolinate synthase (382 aa).

The iminosuccinate site is built by H63 and S84. C129 serves as a coordination point for [4Fe-4S] cluster. Iminosuccinate-binding positions include 155-157 (YAN) and S172. C216 contributes to the [4Fe-4S] cluster binding site. Iminosuccinate-binding positions include 242-244 (HPE) and T259. C313 contacts [4Fe-4S] cluster.

This sequence belongs to the quinolinate synthase family. Type 1 subfamily. Requires [4Fe-4S] cluster as cofactor.

Its subcellular location is the cytoplasm. The enzyme catalyses iminosuccinate + dihydroxyacetone phosphate = quinolinate + phosphate + 2 H2O + H(+). It functions in the pathway cofactor biosynthesis; NAD(+) biosynthesis; quinolinate from iminoaspartate: step 1/1. In terms of biological role, catalyzes the condensation of iminoaspartate with dihydroxyacetone phosphate to form quinolinate. The polypeptide is Quinolinate synthase (Ralstonia pickettii (strain 12J)).